The chain runs to 266 residues: Aliphatic sulfonates import ATP-binding protein SsuB (266 aa).

An ABC transporter domain is found at 23–244 (LALDAITKHY…RRGSAKLAEL (222 aa)). 55-62 (GRSGCGKS) lines the ATP pocket.

It belongs to the ABC transporter superfamily. Aliphatic sulfonates importer (TC 3.A.1.17.2) family. The complex is composed of two ATP-binding proteins (SsuB), two transmembrane proteins (SsuC) and a solute-binding protein (SsuA).

The protein resides in the cell inner membrane. The enzyme catalyses ATP + H2O + aliphatic sulfonate-[sulfonate-binding protein]Side 1 = ADP + phosphate + aliphatic sulfonateSide 2 + [sulfonate-binding protein]Side 1.. Functionally, part of the ABC transporter complex SsuABC involved in aliphatic sulfonates import. Responsible for energy coupling to the transport system. In Pectobacterium atrosepticum (strain SCRI 1043 / ATCC BAA-672) (Erwinia carotovora subsp. atroseptica), this protein is Aliphatic sulfonates import ATP-binding protein SsuB.